A 590-amino-acid polypeptide reads, in one-letter code: Guanylate-binding protein 1 (590 aa).

Positions 1–309 are GTPase domain (Globular); sequence MASEIHMTGP…NAISSGDLPC (309 aa). The GB1/RHD3-type G domain occupies 35-276; that stretch reads TQPVVVVAIV…FCSYIFSNSK (242 aa). Residues 45-52, 67-69, and 97-101 each bind GTP; these read GLYRTGKS, LGS, and DTEGL. Ser156 bears the Phosphoserine mark. Cys587 is modified (cysteine methyl ester). Cys587 is lipidated: S-farnesyl cysteine. Thr588 is subject to Phosphothreonine. Positions 588 to 590 are cleaved as a propeptide — removed in mature form; sequence TIS.

This sequence belongs to the TRAFAC class dynamin-like GTPase superfamily. GB1/RHD3 GTPase family. GB1 subfamily. In terms of assembly, homodimer; homodimerization occurs upon GTP-binding and is required for the second hydrolysis step from GDP to GMP. Undergoes conformational changes and oligomerization upon GTP-binding and hydrolysis. Heterodimer with other family members, including GBP2, GBP3, GBP4 and GBP5. Dimerization regulates subcellular location to membranous structures. Interacts with SQSTM1. Interacts (when phosphorylated) with 14-3-3 protein sigma (SFN); leading to GBP1 retention in the cytosol and inactivation. In terms of processing, isoprenylation is required for proper subcellular location. Post-translationally, phosphorylated at Ser-156 by PIM1 in absence of infection, inhibits GBP1: phosphorylation promotes interaction with 14-3-3 protein sigma (SFN), leading to GBP1 retention in the cytosol. Dephosphorylated in response to infection, liberating GBP1.

It is found in the cytoplasmic vesicle membrane. The protein localises to the golgi apparatus membrane. Its subcellular location is the cell membrane. It localises to the cytoplasm. The protein resides in the cytosol. It is found in the secreted. The enzyme catalyses GTP + H2O = GDP + phosphate + H(+). The catalysed reaction is GDP + H2O = GMP + phosphate + H(+). Interferon (IFN)-inducible GTPase that plays important roles in innate immunity against a diverse range of bacterial, viral and protozoan pathogens. Hydrolyzes GTP to GMP in two consecutive cleavage reactions: GTP is first hydrolyzed to GDP and then to GMP in a processive manner. Following infection, recruited to the pathogen-containing vacuoles or vacuole-escaped bacteria and promotes both inflammasome assembly and autophagy. Acts as a positive regulator of inflammasome assembly by facilitating the detection of inflammasome ligands from pathogens. Involved in the lysis of pathogen-containing vacuoles, releasing pathogens into the cytosol. Following pathogen release in the cytosol, forms a protein coat in a GTPase-dependent manner that encapsulates pathogens and promotes the detection of ligands by pattern recognition receptors. Plays a key role in inflammasome assembly in response to infection by Gram-negative bacteria: following pathogen release in the cytosol, forms a protein coat that encapsulates Gram-negative bacteria and directly binds to lipopolysaccharide (LPS), disrupting the O-antigen barrier and unmasking lipid A that is that detected by the non-canonical inflammasome effector CASP4/CASP11. Also promotes recruitment of proteins that mediate bacterial cytolysis, leading to release double-stranded DNA (dsDNA) that activates the AIM2 inflammasome. Involved in autophagy by regulating bacteriolytic peptide generation via its interaction with ubiquitin-binding protein SQSTM1, which delivers monoubiquitinated proteins to autolysosomes for the generation of bacteriolytic peptides. Confers protection to several pathogens, including the bacterial pathogens L.monocytogenes and M.bovis BCG as well as the protozoan pathogen T.gondii. Exhibits antiviral activity against influenza virus. This chain is Guanylate-binding protein 1 (GBP1), found in Chlorocebus aethiops (Green monkey).